The primary structure comprises 275 residues: Holocytochrome c-type synthase (275 aa).

2 disordered regions span residues 1–59 (MGLS…KTNS) and 83–102 (KENL…PAPD). Residue G2 is the site of N-myristoyl glycine attachment. Polar residues predominate over residues 9-28 (AASTVQTSTPAASDHQTAAP). HRM repeat units lie at residues 31-36 (GCPMHE) and 41-46 (GCPVSA). Positions 48 to 59 (PSDSTCGSKTNS) are enriched in polar residues. A compositionally biased stretch (pro residues) spans 91-102 (LMPPPNQTPAPD).

Belongs to the cytochrome c-type heme lyase family.

Its subcellular location is the mitochondrion inner membrane. It is found in the membrane. The enzyme catalyses holo-[cytochrome c] = apo-[cytochrome c] + heme b. Lyase that catalyzes the covalent linking of the heme group to the cytochrome C apoprotein to produce the mature functional cytochrome. This Bos taurus (Bovine) protein is Holocytochrome c-type synthase.